The following is a 595-amino-acid chain: Protein alan shepard (595 aa).

Positions 1 to 12 (MHPRYSPAPPPH) are enriched in pro residues. Positions 1-82 (MHPRYSPAPP…ASVAAAPPTP (82 aa)) are disordered. Tyr5 bears the Phosphotyrosine mark. Low complexity predominate over residues 13 to 31 (QQQQQQQQQPMGGPHQQQS). Residues 32–43 (AGGGPGHGGGAS) are compositionally biased toward gly residues. Positions 50–68 (PNSQQLPPQMPRSQNYANG) are enriched in polar residues. Low complexity predominate over residues 69-78 (SSSAASVAAA). Residues Tyr138 and Tyr154 each carry the phosphotyrosine modification. The interval 184 to 238 (RVPTAASPSNTNSSSSSNTGSQSGTLSTSLSNTTNTNTTMGPNGTAQNQNQQGGE) is disordered. Positions 190–238 (SPSNTNSSSSSNTGSQSGTLSTSLSNTTNTNTTMGPNGTAQNQNQQGGE) are enriched in low complexity. RRM domains lie at 243 to 316 (TNLY…MAKQ) and 322 to 401 (TNLY…FADG). Residues 569-595 (MTDSEQASTAASPDEAYTQYPHQAAPK) form a disordered region.

Functionally, has a role in the perception of gravity. The sequence is that of Protein alan shepard from Drosophila virilis (Fruit fly).